The sequence spans 50 residues: Fungus-induced protein 3 (50 aa).

In Caenorhabditis elegans, this protein is Fungus-induced protein 3 (fip-3).